We begin with the raw amino-acid sequence, 722 residues long: NCK-interacting protein with SH3 domain (722 aa).

An SH3 domain is found at 1–58; it reads MYRALYAFRSAEPNALAFAAGETFLVLERSSAHWWLAARARSGETGYVPPAYLRRLQG. Disordered regions lie at residues 101-122 and 149-286; these read KETLSRRGPSASSVAVMTSSTS and PSSE…ASDD. The segment covering 110 to 121 has biased composition (low complexity); sequence SASSVAVMTSST. Serine 120 carries the phosphoserine modification. Residues 169 to 185 are compositionally biased toward pro residues; sequence QIPPQPRRAAPTTPPPP. The Nuclear localization signal signature appears at 175–192; that stretch reads RRAAPTTPPPPVKRRDRE. Phosphothreonine is present on threonine 181. The span at 206–240 shows a compositional bias: low complexity; it reads PSGGNSVSSGSSVSSTSLDTLYTSSSPSEPGSSCS. Phosphoserine is present on serine 294.

As to quaternary structure, associates with the intermediate filaments, vimentin and desmin. Binds the first and third SH3 domains of NCK. Binds the proline-rich domains of N-WASP through its SH3 domain. Similarly, binds diaphanous protein homolog 1 (DRF1). Binds the SH3 domains of GRB2 through its proline-rich domains. Interacts with Helicobacter pylori toxin vacA. Isoform 4 interacts with FHOD1. Interacts with FASLG. Interacts with TMIGD2. Highest expression in heart, brain, skeletal muscle, kidney and liver. Lower levels in placenta, lung, small intestine and leukocytes. Weak expression in colon, thymus and spleen.

Its subcellular location is the nucleus. Its function is as follows. Has an important role in stress fiber formation induced by active diaphanous protein homolog 1 (DRF1). Induces microspike formation, in vivo. In vitro, stimulates N-WASP-induced ARP2/3 complex activation in the absence of CDC42. May play an important role in the maintenance of sarcomeres and/or in the assembly of myofibrils into sarcomeres. Implicated in regulation of actin polymerization and cell adhesion. Plays a role in angiogenesis. The polypeptide is NCK-interacting protein with SH3 domain (NCKIPSD) (Homo sapiens (Human)).